An 895-amino-acid polypeptide reads, in one-letter code: La RNA-binding domain-containing protein LHP1 (895 aa).

Disordered stretches follow at residues 24-265 (ANGN…PPPS), 285-344 (SATS…HDAT), 359-590 (GEDK…LGHG), 796-857 (PDAA…AQDV), and 870-895 (VNGE…NYEQ). Residues 31–75 (SSPSSSSSATPEPTSLSSSTSGKKAFSTATSKSGQQKQGSSPQPG) show a composition bias toward low complexity. The segment covering 95-143 (QRTDRSEEKEKRGSSSKNWRERSHRDEKNQDDGEKRNGRERSKKEKGDK) has biased composition (basic and acidic residues). Residues 152-170 (SATSSEKTAKSLSSSTKNA) are compositionally biased toward low complexity. 2 stretches are compositionally biased toward polar residues: residues 172–184 (GVTS…NPIA) and 192–216 (KAQN…STIN). Positions 228–244 (DNWRARPAKVEKNEKTE) are enriched in basic and acidic residues. The span at 251-260 (QAQPQPQRQL) shows a compositional bias: low complexity. Basic and acidic residues predominate over residues 296 to 314 (KSDKEKSLTNGMVKEEDSG). The span at 325–336 (AAAAAAAGTSST) shows a compositional bias: low complexity. 4 stretches are compositionally biased toward basic and acidic residues: residues 359–371 (GEDK…ERLN), 405–428 (HAAE…REGG), 452–468 (EGKK…DGHA), and 485–495 (GDVKETKEGDA). Residues 496–508 (RSASQQESSSHRS) show a composition bias toward low complexity. Residues 510 to 521 (PSISASANTGID) are compositionally biased toward polar residues. Positions 563–572 (RGSFGGGRAR) are enriched in gly residues. Residues 706 to 796 (VPNLDPLRFY…GAESHRWVLP (91 aa)) form the HTH La-type RNA-binding domain. S847 is subject to Phosphoserine. A compositionally biased stretch (basic and acidic residues) spans 873–884 (EIKEKEEVKAME). Positions 885 to 895 (NEGEESENYEQ) are enriched in acidic residues.

Functionally, may act as an RNA-binding protein. The sequence is that of La RNA-binding domain-containing protein LHP1 from Cryptococcus neoformans var. grubii serotype A (strain H99 / ATCC 208821 / CBS 10515 / FGSC 9487) (Filobasidiella neoformans var. grubii).